The sequence spans 391 residues: mRNA-capping enzyme subunit alpha (391 aa).

Lys-63 (N6-GMP-lysine intermediate) is an active-site residue. A disordered region spans residues 363-391 (KERNRRPRDEDRKRVGGDDHDHGAKRARQ).

It belongs to the eukaryotic GTase family. In terms of assembly, heterodimer. The mRNA-capping enzyme is composed of two separate chains alpha and beta, respectively a mRNA guanylyltransferase and an mRNA 5'-triphosphate monophosphatase.

The protein resides in the nucleus. The enzyme catalyses a 5'-end diphospho-ribonucleoside in mRNA + GTP + H(+) = a 5'-end (5'-triphosphoguanosine)-ribonucleoside in mRNA + diphosphate. Second step of mRNA capping. Transfer of the GMP moiety of GTP to the 5'-end of RNA via an enzyme-GMP covalent reaction intermediate. In Yarrowia lipolytica (strain CLIB 122 / E 150) (Yeast), this protein is mRNA-capping enzyme subunit alpha (CEG1).